A 242-amino-acid chain; its full sequence is 4-hydroxy-tetrahydrodipicolinate reductase (242 aa).

Residues Gly8–Met13, Gly75–Thr77, and Ala99–Met102 contribute to the NAD(+) site. His131 functions as the Proton donor/acceptor in the catalytic mechanism. His132 contacts (S)-2,3,4,5-tetrahydrodipicolinate. The active-site Proton donor is Lys135. Gly141–Thr142 is a (S)-2,3,4,5-tetrahydrodipicolinate binding site.

It belongs to the DapB family.

Its subcellular location is the cytoplasm. The enzyme catalyses (S)-2,3,4,5-tetrahydrodipicolinate + NAD(+) + H2O = (2S,4S)-4-hydroxy-2,3,4,5-tetrahydrodipicolinate + NADH + H(+). The catalysed reaction is (S)-2,3,4,5-tetrahydrodipicolinate + NADP(+) + H2O = (2S,4S)-4-hydroxy-2,3,4,5-tetrahydrodipicolinate + NADPH + H(+). The protein operates within amino-acid biosynthesis; L-lysine biosynthesis via DAP pathway; (S)-tetrahydrodipicolinate from L-aspartate: step 4/4. Its function is as follows. Catalyzes the conversion of 4-hydroxy-tetrahydrodipicolinate (HTPA) to tetrahydrodipicolinate. This chain is 4-hydroxy-tetrahydrodipicolinate reductase, found in Campylobacter jejuni subsp. jejuni serotype O:6 (strain 81116 / NCTC 11828).